Consider the following 190-residue polypeptide: Lipid A acyltransferase PagP (190 aa).

Positions Met1–Ala29 are cleaved as a signal peptide. Active-site residues include His62, Asp105, and Ser106.

The protein belongs to the lipid A palmitoyltransferase family. Homodimer.

The protein localises to the cell outer membrane. It catalyses the reaction a lipid A + a 1,2-diacyl-sn-glycero-3-phosphocholine = a hepta-acyl lipid A + a 2-acyl-sn-glycero-3-phosphocholine. It carries out the reaction a lipid IVA + a 1,2-diacyl-sn-glycero-3-phosphocholine = a lipid IVB + a 2-acyl-sn-glycero-3-phosphocholine. The catalysed reaction is a lipid IIA + a 1,2-diacyl-sn-glycero-3-phosphocholine = a lipid IIB + a 2-acyl-sn-glycero-3-phosphocholine. Transfers a fatty acid residue from the sn-1 position of a phospholipid to the N-linked hydroxyfatty acid chain on the proximal unit of lipid A or its precursors. The chain is Lipid A acyltransferase PagP from Salmonella typhi.